We begin with the raw amino-acid sequence, 1014 residues long: MLILSFLCPAFLNAQIVTDERMFSFEEPQLPACITGVQSQLGISGAHYKDGKHSLEWTFEPNGRLELRKDLKFEKKDPTGKDLYLSAFIVWIYNEQPQDAAIEFEFLKDGRKCASFPFGINFKGWRAAWVCYERDMQGTPEEGMNELRIVAPDAKGRLFIDHLITATKVDARQQTADLQVPFVNAGTTNHWLVLYKHSLLKPDIELTPVSDKQRQEMKLLEKRFRDMIYTKGKVTEKEAETIRKKYDLYQITYKDGQVSGVPVFMVRASEAYERMIPDWDKDMLTKMGIEMRAYFDLMKRIAVAYNNSEAGSPIRKEMRRKFLAMYDHITDQGVAYGSCWGNIHHYGYSVRGLYPAYFLMKDVLREEGKLLEAERTLRWYAITNEVYPKPEGNGIDMDSFNTQTTGRIASILMMEDTPEKLQYLKSFSRWIDYGCRPAPGLAGSFKVDGGAFHHRNNYPAYAVGGLDGATNMIYLFSRTSLAVSELAHRTVKDVLLAMRFYCNKLNFPLSMSGRHPDGKGKLVPMHYAIMAIAGTPDGKGDFDKEMASAYLRLVSSDSSSAEQAPEYMPKVSNAQERKIAKRLVENGFRAEPDPQGNLSLGYGCVSVQRRENWSAVARGHSRYLWAAEHYLGHNLYGRYLAHGSLQILTAPPGQTVTPTTSGWQQEGFDWNRIPGVTSIHLPLDLLKANVLNVDTFSGMEEMLYSDEAFAGGLSQGKMNGNFGMKLHEHDKYNGTHRARKSFHFIDGMIVCLGSDIENTNMDYPTETTIFQLAVTDKAAHDYWKNNAGEGKVWMDHLGTGYYVPVAARFEKNFPQYSRMQDTGKETKGDWVSLIIDHGKAPKAGSYEYAILPGTDRKTMTAFAKKPAYSVLQQDRNAHILESPSDRITSYVLFETPQSLLPGGLLQRTDTSCLVMVRKESADKVLLTVAQPDLALYRGPSDEAFDKDGKRMERSIYSRPWIDNESGEIPVTVTLKGRWKVVETPYCKVVSEDKKQTVLRFLCKDGASYEVELEK.

Positions 1 to 14 (MLILSFLCPAFLNA) are cleaved as a signal peptide. Ca(2+)-binding residues include Ser-24, Glu-26, Asp-50, His-53, and Asp-161. Residues His-345 and His-454 each act as proton acceptor in the active site. The active-site Proton donor is the Tyr-461.

Belongs to the polysaccharide lyase 8 family. In terms of assembly, monomer. Requires Ca(2+) as cofactor. Mg(2+) serves as cofactor.

It is found in the periplasm. The catalysed reaction is Exolytic removal of Delta(4)-unsaturated disaccharide residues from the non-reducing ends of both polymeric chondroitin/dermatan sulfates and their oligosaccharide fragments.. Specific activity for chondroitin sulfate substrates increases moderately (2-fold) while an increase of 25-fold is observed for dermatan sulfate as substrate upon addition of Ca(2+) or Mg(2+) ions. Increasing the concentration of Na(+), K(+) or Cs(+) chloride from 0 to 0.1 M, increases the activity against all substrates. Further increases in salt concentration reduces the activity dramatically, with 50% inhibition occurring at 0.15 M and nearly complete inhibition at 0.4 M salt. The addition of 10 mM Ca(2+) or Mg(2+) ions increases the activity against chondroitin 4- and 6-sulfates by 2-3-fold, while the activity against dermatan sulfate increases much more significantly by 50-fold. Addition of Mn(2+) and Zn(2+) reduces activity against chondroitin sulfate substrates, but increases the activity against dermatan sulfate. Increasing the concentration of CaCl(2) with both chondroitin 4- and 6-sulfates from 0 to 0.04 M increases the activity. A further increase reduces activity, with 50% inhibition at 0.065-0.085 M and a complete inhibition of the reaction at 0.2 M. In case of dermatan sulfate, the addition of low concentration of CaCl(2) dramatically increases the activity from the basal level. The maximal activity is reached at 0.01 M CaCl(2). Functionally, broad-specificity glycosaminoglycan lyase, which acts in an exolytic fashion degrading chondroitin sulfates and dermatan sulfate to yield only disaccharide products. Has a preference for chondroitin 4-sulfate over chondroitin 6-sulfate. Has extremely low activity against hyaluronic acid. Is not active against acharan sulfate, heparin or heparan sulfate. This is Chondroitin sulfate ABC exolyase (chonabc) from Bacteroides thetaiotaomicron.